The sequence spans 305 residues: MLKQRTIKSLVKTVGIGLHSGRKVTLTLRPAPAGTGIVFTRVDLPEAVEIPVAASAIGDTRLASVLQKDGARVSTVEHLMSACAGLGIDNLYVDVDAEEIPIMDGSAASFVFLLQSAGIEEQNAPKTFIRVKKPVEVREGDKLARLEPFFGFKLSFTIDFRHPAVDKTGQTFSIDFADTSYVREIARARTFGFAHEVEALREMGLARGGSLDNAIVLDEHRMLNNEELRYGDEFVRHKILDAIGDLYVVGHPLIGAYVANKSGHGLNNQLLRALLADQEAYELVTFDRVEEAPAAFLPQAQPAFA.

Residues His-78, His-237, and Asp-241 each coordinate Zn(2+). His-264 functions as the Proton donor in the catalytic mechanism.

The protein belongs to the LpxC family. It depends on Zn(2+) as a cofactor.

It catalyses the reaction a UDP-3-O-[(3R)-3-hydroxyacyl]-N-acetyl-alpha-D-glucosamine + H2O = a UDP-3-O-[(3R)-3-hydroxyacyl]-alpha-D-glucosamine + acetate. Its pathway is glycolipid biosynthesis; lipid IV(A) biosynthesis; lipid IV(A) from (3R)-3-hydroxytetradecanoyl-[acyl-carrier-protein] and UDP-N-acetyl-alpha-D-glucosamine: step 2/6. Its function is as follows. Catalyzes the hydrolysis of UDP-3-O-myristoyl-N-acetylglucosamine to form UDP-3-O-myristoylglucosamine and acetate, the committed step in lipid A biosynthesis. The polypeptide is UDP-3-O-acyl-N-acetylglucosamine deacetylase (Cupriavidus taiwanensis (strain DSM 17343 / BCRC 17206 / CCUG 44338 / CIP 107171 / LMG 19424 / R1) (Ralstonia taiwanensis (strain LMG 19424))).